We begin with the raw amino-acid sequence, 132 residues long: MSNKFLGTWKLVSSEHFDDYMKALGVGLANRKLGNLAKPTVIISKKGDYITIRTESAFKNTEISFKLGQEFDETTADNRKAKSIVTLERGSLKQVQKWDGKETAIRRTLLDGRMVVECIMKGVVCTRIYEKV.

Ser2 carries the post-translational modification N-acetylserine. Residues Arg107 and 127–129 (RIY) contribute to the (9Z)-octadecenoate site. Hexadecanoate-binding positions include Arg107 and 127-129 (RIY).

Belongs to the calycin superfamily. Fatty-acid binding protein (FABP) family. Monomer.

It is found in the cytoplasm. Functionally, may play a role in lipid transport protein in Schwann cells. May bind cholesterol. In Mus musculus (Mouse), this protein is Myelin P2 protein (Pmp2).